A 220-amino-acid polypeptide reads, in one-letter code: Sugar transporter SWEET1 (220 aa).

The next 7 helical transmembrane spans lie at 9 to 29, 44 to 64, 70 to 90, 106 to 126, 138 to 158, 167 to 187, and 191 to 211; these read LMTF…IMPL, VAGL…SYAL, TMLF…FNYW, VMIA…NTVD, LSSV…AIVI, IINV…FGLL, and IYIY…LTLI. The MtN3/slv 1 domain occupies 12–92; it reads FIQFCATFIT…IYYVFNYWKN (81 aa). Residues 134–217 enclose the MtN3/slv 2 domain; that stretch reads RLGFLSSVVC…LTLIKLYPPQ (84 aa).

This sequence belongs to the SWEET sugar transporter family.

Its subcellular location is the golgi apparatus membrane. It localises to the cell membrane. Its function is as follows. Mediates both low-affinity uptake and efflux of sugar across the membrane. The protein is Sugar transporter SWEET1 (slc50a1) of Dictyostelium discoideum (Social amoeba).